We begin with the raw amino-acid sequence, 190 residues long: GATA transcription factor 17 (190 aa).

Basic and acidic residues predominate over residues 1–14; that stretch reads MSEGSEDTKTKLDS. Disordered regions lie at residues 1–42 and 77–101; these read MSEG…DTKR and RQAA…NDLN. The GATA-type zinc finger occupies 38-92; it reads GDTKRTCVDCGTIRTPLWRGGPAGPKSLCNACGIKSRKKRQAALGMRSEEKKKNR.

It belongs to the type IV zinc-finger family. Class B subfamily.

Its subcellular location is the nucleus. Transcriptional regulator that specifically binds 5'-GATA-3' or 5'-GAT-3' motifs within gene promoters. The polypeptide is GATA transcription factor 17 (GATA17) (Arabidopsis thaliana (Mouse-ear cress)).